A 592-amino-acid polypeptide reads, in one-letter code: Aspartate--tRNA(Asp/Asn) ligase (592 aa).

Position 172 (Glu172) interacts with L-aspartate. Positions Gln196–Lys199 are aspartate. Arg218 contributes to the L-aspartate binding site. ATP-binding positions include Arg218–Glu220 and Gln227. His450 lines the L-aspartate pocket. ATP is bound at residue Glu484. L-aspartate is bound at residue Arg491. ATP is bound at residue Gly536–Arg539.

Belongs to the class-II aminoacyl-tRNA synthetase family. Type 1 subfamily. In terms of assembly, homodimer.

Its subcellular location is the cytoplasm. The enzyme catalyses tRNA(Asx) + L-aspartate + ATP = L-aspartyl-tRNA(Asx) + AMP + diphosphate. Aspartyl-tRNA synthetase with relaxed tRNA specificity since it is able to aspartylate not only its cognate tRNA(Asp) but also tRNA(Asn). Reaction proceeds in two steps: L-aspartate is first activated by ATP to form Asp-AMP and then transferred to the acceptor end of tRNA(Asp/Asn). This Thioalkalivibrio sulfidiphilus (strain HL-EbGR7) protein is Aspartate--tRNA(Asp/Asn) ligase.